Reading from the N-terminus, the 760-residue chain is Translocation protein SEC63 homolog (760 aa).

Topologically, residues 1 to 14 are lumenal; the sequence is MAGQQFQYDDSGNT. The chain crosses the membrane as a helical span at residues 15–35; the sequence is FFYFLTSFVGLIVIPATYYLW. Over 36–69 the chain is Cytoplasmic; the sequence is PRDQNAEQIRLKNIRKVYGRCMWYRLRLLKPQPN. Residues 70 to 90 form a helical membrane-spanning segment; sequence IIPTVKKIVLLAGWALFLFLA. The Lumenal portion of the chain corresponds to 91–188; sequence YKVSKTDREY…LPAWIVDQKN (98 aa). Residues 104–165 enclose the J domain; that stretch reads NPYEVLNLDP…ESRKNWEEFG (62 aa). Residues 189 to 209 form a helical membrane-spanning segment; it reads SILVLLVYGLAFMVILPVVVG. The SEC63 1 domain occupies 197–541; it reads GLAFMVILPV…LKKKPTPVLL (345 aa). At 210 to 760 the chain is on the cytoplasmic side; the sequence is SWWYRSIRYS…EEEEEEEDDD (551 aa). The tract at residues 492-617 is disordered; the sequence is AEEQPAEDGQ…DDEAEWQELQ (126 aa). Residues 518-536 show a composition bias toward basic residues; the sequence is KGPKKTAKSKKKKPLKKKP. Thr537 bears the Phosphothreonine mark. Residues 582–608 are compositionally biased toward basic and acidic residues; sequence NRDSQSEKDDGSDRDSDREQDEKQNKD. Residues 597–635 are a coiled coil; the sequence is SDREQDEKQNKDDEAEWQELQQSIQRKERALLETKSKIT. The SEC63 2 domain maps to 637 to 714; it reads PVYSLYFPEE…GLDQIKPLKL (78 aa). A disordered region spans residues 720-760; that stretch reads KPVPENHPQWDTAIEGDEDQEDSEGFEDSFEEEEEEEEDDD. Positions 733–760 are enriched in acidic residues; sequence IEGDEDQEDSEGFEDSFEEEEEEEEDDD. A phosphoserine mark is found at Ser742 and Ser748.

As to quaternary structure, the ER translocon complex consists of channel-forming core components SEC61A1, SEC61B and SEC61G and different auxiliary components such as SEC62 and SEC63. In terms of tissue distribution, widely expressed, with high levels in the liver.

It localises to the endoplasmic reticulum membrane. In terms of biological role, mediates cotranslational and post-translational transport of certain precursor polypeptides across endoplasmic reticulum (ER). Proposed to play an auxiliary role in recognition of precursors with short and apolar signal peptides. May cooperate with SEC62 and HSPA5/BiP to facilitate targeting of small presecretory proteins into the SEC61 channel-forming translocon complex, triggering channel opening for polypeptide translocation to the ER lumen. Required for efficient PKD1/Polycystin-1 biogenesis and trafficking to the plasma membrane of the primary cilia. The sequence is that of Translocation protein SEC63 homolog from Homo sapiens (Human).